We begin with the raw amino-acid sequence, 433 residues long: Bifunctional protein GlmU (433 aa).

Residues M1–Q226 are pyrophosphorylase. UDP-N-acetyl-alpha-D-glucosamine is bound by residues L7–G10, K21, and G80–T81. D106 is a Mg(2+) binding site. Residues G138, E152, N167, and N224 each coordinate UDP-N-acetyl-alpha-D-glucosamine. N224 contacts Mg(2+). The segment at T227–L247 is linker. An N-acetyltransferase region spans residues G248–P433. UDP-N-acetyl-alpha-D-glucosamine is bound by residues R311 and K328. The active-site Proton acceptor is H339. Residues Y342 and N353 each contribute to the UDP-N-acetyl-alpha-D-glucosamine site. Acetyl-CoA contacts are provided by residues A356, N362–Y363, S381, S399, and R416.

This sequence in the N-terminal section; belongs to the N-acetylglucosamine-1-phosphate uridyltransferase family. It in the C-terminal section; belongs to the transferase hexapeptide repeat family. Homotrimer. Requires Mg(2+) as cofactor.

It localises to the cytoplasm. It carries out the reaction alpha-D-glucosamine 1-phosphate + acetyl-CoA = N-acetyl-alpha-D-glucosamine 1-phosphate + CoA + H(+). The enzyme catalyses N-acetyl-alpha-D-glucosamine 1-phosphate + UTP + H(+) = UDP-N-acetyl-alpha-D-glucosamine + diphosphate. It participates in nucleotide-sugar biosynthesis; UDP-N-acetyl-alpha-D-glucosamine biosynthesis; N-acetyl-alpha-D-glucosamine 1-phosphate from alpha-D-glucosamine 6-phosphate (route II): step 2/2. The protein operates within nucleotide-sugar biosynthesis; UDP-N-acetyl-alpha-D-glucosamine biosynthesis; UDP-N-acetyl-alpha-D-glucosamine from N-acetyl-alpha-D-glucosamine 1-phosphate: step 1/1. Its pathway is bacterial outer membrane biogenesis; LPS lipid A biosynthesis. In terms of biological role, catalyzes the last two sequential reactions in the de novo biosynthetic pathway for UDP-N-acetylglucosamine (UDP-GlcNAc). The C-terminal domain catalyzes the transfer of acetyl group from acetyl coenzyme A to glucosamine-1-phosphate (GlcN-1-P) to produce N-acetylglucosamine-1-phosphate (GlcNAc-1-P), which is converted into UDP-GlcNAc by the transfer of uridine 5-monophosphate (from uridine 5-triphosphate), a reaction catalyzed by the N-terminal domain. In Helicobacter pylori (strain ATCC 700392 / 26695) (Campylobacter pylori), this protein is Bifunctional protein GlmU.